A 387-amino-acid polypeptide reads, in one-letter code: Exodeoxyribonuclease 7 large subunit (387 aa).

This sequence belongs to the XseA family. As to quaternary structure, heterooligomer composed of large and small subunits.

It is found in the cytoplasm. It catalyses the reaction Exonucleolytic cleavage in either 5'- to 3'- or 3'- to 5'-direction to yield nucleoside 5'-phosphates.. Functionally, bidirectionally degrades single-stranded DNA into large acid-insoluble oligonucleotides, which are then degraded further into small acid-soluble oligonucleotides. The chain is Exodeoxyribonuclease 7 large subunit from Campylobacter jejuni (strain RM1221).